The following is a 99-amino-acid chain: Transmembrane protein 14A (99 aa).

3 helical membrane passes run M1–K21, G24–Y44, and P79–L99.

The protein belongs to the TMEM14 family. In terms of tissue distribution, expressed at significantly higher levels in ovarian cancer tissues than in normal tissues (at protein level).

It localises to the mitochondrion membrane. The protein localises to the endoplasmic reticulum membrane. Functionally, inhibits apoptosis via negative regulation of the mitochondrial outer membrane permeabilization involved in apoptotic signaling pathway. This Homo sapiens (Human) protein is Transmembrane protein 14A (TMEM14A).